A 255-amino-acid polypeptide reads, in one-letter code: Homeobox protein Hox-D4 (255 aa).

The segment at 31–128 is disordered; sequence EQGADYYGGG…KQPPPGTALK (98 aa). A compositionally biased stretch (pro residues) spans 94-109; it reads EPCPAPPAPPPAPLPG. Positions 133–138 match the Antp-type hexapeptide motif; that stretch reads VYPWMK. Positions 154-213 form a DNA-binding region, homeobox; that stretch reads PKRSRTAYTRQQVLELEKEFHFNRYLTRRRRIEIAHTLCLSERQIKIWFQNRRMKWKKDH. Positions 212 to 255 are disordered; that stretch reads DHKLPNTKGRSSSSSSSSSCSSSVAPSQHLQPMAKDHHTDLTTL. Residues 222 to 234 are compositionally biased toward low complexity; the sequence is SSSSSSSSSCSSS. The span at 245–255 shows a compositional bias: basic and acidic residues; that stretch reads AKDHHTDLTTL.

The protein belongs to the Antp homeobox family. Deformed subfamily. As to quaternary structure, forms a DNA-binding heterodimer with transcription factor PBX1.

It localises to the nucleus. Sequence-specific transcription factor which is part of a developmental regulatory system that provides cells with specific positional identities on the anterior-posterior axis. This is Homeobox protein Hox-D4 (HOXD4) from Gorilla gorilla gorilla (Western lowland gorilla).